Consider the following 272-residue polypeptide: NH(3)-dependent NAD(+) synthetase (272 aa).

Position 45 to 52 (45 to 52 (GISGGQDS)) interacts with ATP. D51 contributes to the Mg(2+) binding site. Residue R138 coordinates deamido-NAD(+). Residue T158 coordinates ATP. E163 lines the Mg(2+) pocket. 2 residues coordinate deamido-NAD(+): K171 and D178. ATP contacts are provided by K187 and T209. 258 to 259 (HK) is a binding site for deamido-NAD(+).

This sequence belongs to the NAD synthetase family. Homodimer.

The enzyme catalyses deamido-NAD(+) + NH4(+) + ATP = AMP + diphosphate + NAD(+) + H(+). Its pathway is cofactor biosynthesis; NAD(+) biosynthesis; NAD(+) from deamido-NAD(+) (ammonia route): step 1/1. Its function is as follows. Catalyzes the ATP-dependent amidation of deamido-NAD to form NAD. Uses ammonia as a nitrogen source. This chain is NH(3)-dependent NAD(+) synthetase, found in Bacillus licheniformis (strain ATCC 14580 / DSM 13 / JCM 2505 / CCUG 7422 / NBRC 12200 / NCIMB 9375 / NCTC 10341 / NRRL NRS-1264 / Gibson 46).